The sequence spans 196 residues: Xanthine phosphoribosyltransferase (196 aa).

The xanthine site is built by L20 and N27. 128-132 is a 5-phospho-alpha-D-ribose 1-diphosphate binding site; sequence ATGAA. K156 lines the xanthine pocket.

The protein belongs to the purine/pyrimidine phosphoribosyltransferase family. Xpt subfamily. Homodimer.

Its subcellular location is the cytoplasm. It catalyses the reaction XMP + diphosphate = xanthine + 5-phospho-alpha-D-ribose 1-diphosphate. It functions in the pathway purine metabolism; XMP biosynthesis via salvage pathway; XMP from xanthine: step 1/1. Converts the preformed base xanthine, a product of nucleic acid breakdown, to xanthosine 5'-monophosphate (XMP), so it can be reused for RNA or DNA synthesis. In Brevibacillus brevis (strain 47 / JCM 6285 / NBRC 100599), this protein is Xanthine phosphoribosyltransferase.